Reading from the N-terminus, the 75-residue chain is Small ribosomal subunit protein bS18 (75 aa).

This sequence belongs to the bacterial ribosomal protein bS18 family. In terms of assembly, part of the 30S ribosomal subunit. Forms a tight heterodimer with protein bS6.

Its function is as follows. Binds as a heterodimer with protein bS6 to the central domain of the 16S rRNA, where it helps stabilize the platform of the 30S subunit. The chain is Small ribosomal subunit protein bS18 from Buchnera aphidicola subsp. Acyrthosiphon pisum (strain 5A).